The chain runs to 222 residues: Adenylate kinase, chloroplastic (222 aa).

15–20 (ASGKGT) contacts ATP. The NMP stretch occupies residues 35–64 (SAGDLLRAEIAAGSENGKRAKEFMEKGQLV). Residues arginine 41, 62 to 64 (QLV), 91 to 94 (GYPR), and glutamine 98 each bind AMP. The segment at 128–161 (GRRLDPVTGKIYHLKYSPPENEEIASRLTQRFDD) is LID. Position 129 (arginine 129) interacts with ATP. Position 158 (arginine 158) interacts with AMP. Alanine 195 contributes to the ATP binding site.

Monomer.

The protein resides in the plastid. The protein localises to the chloroplast. The enzyme catalyses AMP + ATP = 2 ADP. Functionally, catalyzes the reversible transfer of the terminal phosphate group between ATP and AMP. Plays an important role in cellular energy homeostasis and in adenine nucleotide metabolism. The maize enzyme also works with CMP, albeit with 10% of the activity with AMP. This Zea mays (Maize) protein is Adenylate kinase, chloroplastic (ADK1).